A 193-amino-acid polypeptide reads, in one-letter code: Rho-related GTP-binding protein RhoA-D (193 aa).

Residues 12-19 (GDGACGKT), 30-37 (FPEVYVPT), 59-63 (DTAGQ), 117-120 (NKKD), and 160-162 (SAK) contribute to the GTP site. A glycan ((Microbial infection) O-linked (GlcNAc) tyrosine; by Yersinia Afp18) is linked at Tyr34. Cys190 is subject to Cysteine methyl ester. Cys190 carries the S-geranylgeranyl cysteine lipid modification. The propeptide at 191-193 (LLL) is removed in mature form.

Belongs to the small GTPase superfamily. Rho family. Post-translationally, (Microbial infection) Glycosylated at Tyr-34 by Yersinia ruckeri toxin Afp18. Mono-O-GlcNAcylation by Afp18 inhibits RhoA activation by guanine nucleotide exchange factors and blocks RhoA signaling.

Its subcellular location is the cell membrane. Its function is as follows. Regulates a signal transduction pathway linking plasma membrane receptors to the assembly of focal adhesions and actin stress fibers. The protein is Rho-related GTP-binding protein RhoA-D of Danio rerio (Zebrafish).